The sequence spans 138 residues: Transcription antitermination protein NusB (138 aa).

It belongs to the NusB family.

Its function is as follows. Involved in transcription antitermination. Required for transcription of ribosomal RNA (rRNA) genes. Binds specifically to the boxA antiterminator sequence of the ribosomal RNA (rrn) operons. In Helicobacter pylori (strain ATCC 700392 / 26695) (Campylobacter pylori), this protein is Transcription antitermination protein NusB.